The sequence spans 56 residues: U4-myrmicitoxin-Tb1a (56 aa).

The signal sequence occupies residues 1–26; sequence MQPSYLLLTFAIIFVMVIMYSPAVEA. A propeptide spanning residues 27 to 40 is cleaved from the precursor; that stretch reads KAGADADADAHADA. Glycine amide is present on Gly-53.

Post-translationally, contains 1 disulfide bond. Expressed by the venom gland.

The protein resides in the secreted. Its function is as follows. Venom protein with unknown function. Does not induce paralysis when a high dose is administered by intrathoracic injection into the blowfly Lucilia caesar. The chain is U4-myrmicitoxin-Tb1a from Tetramorium bicarinatum (Tramp ant).